A 285-amino-acid polypeptide reads, in one-letter code: 1-acyl-sn-glycerol-3-phosphate acyltransferase alpha (285 aa).

Residues 1–28 (MELWPGAWTALLLLLLLLLSTLWFCSSS) form the signal peptide. The Lumenal segment spans residues 29-34 (AKYFFK). Residues 35 to 55 (MAFYNGWILFLAILAIPVCAV) form a helical membrane-spanning segment. Residues 56–124 (RGRNVENMKI…PDRCVPIAKR (69 aa)) lie on the Cytoplasmic side of the membrane. An HXXXXD motif motif is present at residues 101–106 (HQSSLD). A helical transmembrane segment spans residues 125 to 145 (ELLWAGSAGLACWLAGIIFID). The Lumenal segment spans residues 146–189 (RKRTGDAISVMSEVAQTLLTQDVRVWVFPEGTRNHNGSMLPFKR). The EGTR motif motif lies at 175-178 (EGTR).

Belongs to the 1-acyl-sn-glycerol-3-phosphate acyltransferase family. Widely expressed.

It is found in the endoplasmic reticulum membrane. The enzyme catalyses a 1-acyl-sn-glycero-3-phosphate + an acyl-CoA = a 1,2-diacyl-sn-glycero-3-phosphate + CoA. It carries out the reaction 1-(9Z-octadecenoyl)-sn-glycero-3-phosphate + (9Z)-octadecenoyl-CoA = 1,2-di-(9Z-octadecenoyl)-sn-glycero-3-phosphate + CoA. It catalyses the reaction 1-(9Z-octadecenoyl)-sn-glycero-3-phosphate + hexadecanoyl-CoA = 1-(9Z)-octadecenoyl-2-hexadecanoyl-sn-glycero-3-phosphate + CoA. The catalysed reaction is heptadecanoyl-CoA + 1-(9Z-octadecenoyl)-sn-glycero-3-phosphate = 1-(9Z)-octadecenoyl-2-heptadecanoyl-sn-glycero-3-phosphate + CoA. The enzyme catalyses 1-(9Z-octadecenoyl)-sn-glycero-3-phosphate + octadecanoyl-CoA = 1-(9Z-octadecenoyl)-2-octadecanoyl-sn-glycero-3-phosphate + CoA. It carries out the reaction 1-(9Z-octadecenoyl)-sn-glycero-3-phosphate + (9Z,12Z)-octadecadienoyl-CoA = 1-(9Z)-octadecenoyl-2-(9Z,12Z)-octadecadienoyl-sn-glycero-3-phosphate + CoA. It catalyses the reaction 1-(9Z-octadecenoyl)-sn-glycero-3-phosphate + tetradecanoyl-CoA = 1-(9Z)-octadecenoyl-2-tetradecanoyl-sn-glycero-3-phosphate + CoA. The catalysed reaction is pentadecanoyl-CoA + 1-(9Z-octadecenoyl)-sn-glycero-3-phosphate = 1-(9Z)-octadecenoyl-2-pentadecanoyl-sn-glycero-3-phosphate + CoA. The enzyme catalyses 1-hexadecanoyl-sn-glycero-3-phosphate + (9Z)-octadecenoyl-CoA = 1-hexadecanoyl-2-(9Z-octadecenoyl)-sn-glycero-3-phosphate + CoA. It carries out the reaction 1-(9Z,12Z,15Z)-octadecatrienoyl-sn-glycero-3-phosphate + (9Z)-octadecenoyl-CoA = 1-(9Z,12Z,15Z)-octadecatrienoyl-2-(9Z)-octadecenoyl-sn-glycero-3-phosphate + CoA. It catalyses the reaction 1-(6Z,9Z,12Z-octadecatrienoyl)-sn-glycero-3-phosphate + (9Z)-octadecenoyl-CoA = (6Z,9Z,12Z)-octadecatrienoyl-2-(9Z)-octadecenoyl-sn-glycero-3-phosphate + CoA. The catalysed reaction is 1-eicosanoyl-sn-glycero-3-phosphate + (9Z)-octadecenoyl-CoA = 1-eicosanoyl-2-(9Z)-octadecenoyl-sn-glycero-3-phosphate + CoA. The enzyme catalyses 1-tetradecanoyl-sn-glycerol 3-phosphate + (9Z)-octadecenoyl-CoA = 1-tetradecanoyl-2-(9Z)-octadecenoyl-sn-glycero-3-phosphate + CoA. It carries out the reaction 1-(9Z-octadecenoyl)-sn-glycero-3-phosphate + (5Z,8Z,11Z,14Z)-eicosatetraenoyl-CoA = 1-(9Z)-octadecenoyl-2-(5Z,8Z,11Z,14Z)-eicosatetraenoyl-sn-glycero-3-phosphate + CoA. It catalyses the reaction 1-(9Z-octadecenoyl)-sn-glycero-3-phosphate + dodecanoyl-CoA = 1-(9Z)-octadecenoyl-2-dodecanoyl-sn-glycero-3-phosphate + CoA. The catalysed reaction is (6Z)-octadecenoyl-CoA + 1-(9Z-octadecenoyl)-sn-glycero-3-phosphate = 1-(9Z)-octadecenoyl-2-(6Z)-octadecenoyl-sn-glycero-3-phosphate + CoA. The enzyme catalyses (11Z)-octadecenoyl-CoA + 1-(9Z-octadecenoyl)-sn-glycero-3-phosphate = 1-(9Z)-octadecenoyl-2-(11Z)-octadecenoyl-sn-glycero-3-phosphate + CoA. It carries out the reaction (9Z)-hexadecenoyl-CoA + 1-(9Z-octadecenoyl)-sn-glycero-3-phosphate = 1-(9Z-octadecenoyl)-2-(9Z-hexadecenoyl)-sn-glycero-3-phosphate + CoA. It functions in the pathway phospholipid metabolism; CDP-diacylglycerol biosynthesis; CDP-diacylglycerol from sn-glycerol 3-phosphate: step 2/3. Its function is as follows. Converts 1-acyl-sn-glycerol-3-phosphate (lysophosphatidic acid or LPA) into 1,2-diacyl-sn-glycerol-3-phosphate (phosphatidic acid or PA) by incorporating an acyl moiety at the sn-2 position of the glycerol backbone. The polypeptide is 1-acyl-sn-glycerol-3-phosphate acyltransferase alpha (Agpat1) (Mus musculus (Mouse)).